The sequence spans 351 residues: Uroporphyrinogen decarboxylase (351 aa).

Substrate contacts are provided by residues 25-29, Asp-74, Tyr-151, Ser-206, and His-325; that span reads RQAGR.

This sequence belongs to the uroporphyrinogen decarboxylase family. Homodimer.

The protein resides in the cytoplasm. The enzyme catalyses uroporphyrinogen III + 4 H(+) = coproporphyrinogen III + 4 CO2. Its pathway is porphyrin-containing compound metabolism; protoporphyrin-IX biosynthesis; coproporphyrinogen-III from 5-aminolevulinate: step 4/4. Its function is as follows. Catalyzes the decarboxylation of four acetate groups of uroporphyrinogen-III to yield coproporphyrinogen-III. This Chlorobium phaeobacteroides (strain DSM 266 / SMG 266 / 2430) protein is Uroporphyrinogen decarboxylase.